The chain runs to 302 residues: Sulfate adenylyltransferase subunit 2 (302 aa).

It belongs to the PAPS reductase family. CysD subfamily. Heterodimer composed of CysD, the smaller subunit, and CysN.

The enzyme catalyses sulfate + ATP + H(+) = adenosine 5'-phosphosulfate + diphosphate. The protein operates within sulfur metabolism; hydrogen sulfide biosynthesis; sulfite from sulfate: step 1/3. With CysN forms the ATP sulfurylase (ATPS) that catalyzes the adenylation of sulfate producing adenosine 5'-phosphosulfate (APS) and diphosphate, the first enzymatic step in sulfur assimilation pathway. APS synthesis involves the formation of a high-energy phosphoric-sulfuric acid anhydride bond driven by GTP hydrolysis by CysN coupled to ATP hydrolysis by CysD. This chain is Sulfate adenylyltransferase subunit 2, found in Salmonella paratyphi A (strain AKU_12601).